Consider the following 335-residue polypeptide: Zinc-type alcohol dehydrogenase-like protein SAV2186 (335 aa).

This sequence belongs to the zinc-containing alcohol dehydrogenase family. Quinone oxidoreductase subfamily.

This Staphylococcus aureus (strain Mu50 / ATCC 700699) protein is Zinc-type alcohol dehydrogenase-like protein SAV2186.